Consider the following 232-residue polypeptide: Ion-translocating oxidoreductase complex subunit E (232 aa).

6 consecutive transmembrane segments (helical) span residues A18–G38, L39–I59, I69–A89, E93–G113, A128–M148, and P182–A202.

The protein belongs to the NqrDE/RnfAE family. As to quaternary structure, the complex is composed of six subunits: RnfA, RnfB, RnfC, RnfD, RnfE and RnfG.

The protein localises to the cell inner membrane. Part of a membrane-bound complex that couples electron transfer with translocation of ions across the membrane. This chain is Ion-translocating oxidoreductase complex subunit E, found in Pseudoalteromonas atlantica (strain T6c / ATCC BAA-1087).